The sequence spans 664 residues: Tripartite terminase subunit 1 (664 aa).

A C3H1-type zinc finger spans residues 205–233; the sequence is CHVCFEELCVTANQGATASRRLAGKICDH. Disordered regions lie at residues 273–295 and 440–466; these read SKMTEANSGGPAEAPGPAAAQER and HAAEDPPGDGNAEKEARRAPSLGGGPE. Residues 281 to 292 show a composition bias toward low complexity; that stretch reads GGPAEAPGPAAA.

Belongs to the herpesviridae TRM1 protein family. As to quaternary structure, associates with TRM2 and TRM3 to form the tripartite terminase complex. Interacts with portal protein.

The protein localises to the host nucleus. Component of the molecular motor that translocates viral genomic DNA in empty capsid during DNA packaging. Forms a tripartite terminase complex together with TRM2 and TRM3 in the host cytoplasm. Once the complex reaches the host nucleus, it interacts with the capsid portal vertex. This portal forms a ring in which genomic DNA is translocated into the capsid. TRM1 carries an endonuclease activity that plays an important role for the cleavage of concatemeric viral DNA into unit length genomes. This is Tripartite terminase subunit 1 from Bos taurus (Bovine).